Reading from the N-terminus, the 240-residue chain is MSRRRTLGPKKKIALLVSAVTVAGGGAFVMASTSNASPPTTKSAAESTACLGLATALGNNEKFIADQQANPDAQSEARIANRQAVIEEIKRKQEASGCTVGESAQDSQTAQPSQPAQGGEQAGGGEQAGGAEEAGGAQASQPAESAPAENAGGGAAASGQQVCNGSTVTLSGEGGAPAASSNQFPAGTKLKVTNLDNNKSTTVEVTSVSGSCVLLNNAAFEQVREAGKFLIRRAVIEKVG.

The segment at 93–160 (QEASGCTVGE…AGGGAAASGQ (68 aa)) is disordered. 2 stretches are compositionally biased toward low complexity: residues 110 to 119 (AQPSQPAQGG) and 129 to 150 (GGAE…PAEN).

This is an uncharacterized protein from Streptomyces viridochromogenes.